The primary structure comprises 211 residues: RILP-like protein 2 (211 aa).

Residues 1–32 (MEEPPVREEEEEEGEEDEERDEVGPEGALGKS) form a disordered region. Acidic residues predominate over residues 8 to 21 (EEEEEEGEEDEERD). Residues 24–106 (GPEGALGKSP…RKEVEGLRRQ (83 aa)) form the RH1 domain. Positions 70 to 164 (RVLEMLEALV…VQEELQCYKS (95 aa)) form a coiled coil. S107 is modified (phosphoserine). Residues 130–201 (RPRFTLQELR…NKEEKTIIKK (72 aa)) enclose the RH2 domain. Residues 166-190 (LIPPREGPGGRREKDAVVTSAKNAG) form a disordered region.

This sequence belongs to the RILPL family. In terms of assembly, homodimer. Interacts with RAC1. Interacts (via N-terminus) with MYO5A, the interaction is required for its role in dendrite formation. Interacts with RAB8A; interaction is dependent on the phosphorylation of RAB8A on 'Thr-72'. Interacts with RAB10 and RAB12; interaction is dependent on the phosphorylation of 'Thr-73' on RAB10 and 'Ser-105' on RAB12. As to expression, widely expressed. Expressed at higher level in lung.

The protein resides in the cytoplasm. It is found in the cytosol. Its subcellular location is the cytoskeleton. It localises to the microtubule organizing center. The protein localises to the centrosome. The protein resides in the cell projection. It is found in the cilium. In terms of biological role, involved in cell shape and neuronal morphogenesis, positively regulating the establishment and maintenance of dendritic spines. Plays a role in cellular protein transport, including protein transport away from primary cilia. May function via activation of RAC1 and PAK1. The sequence is that of RILP-like protein 2 (RILPL2) from Homo sapiens (Human).